Consider the following 249-residue polypeptide: Geranylgeranylglyceryl phosphate synthase (249 aa).

Mg(2+)-binding residues include Asp20 and Ser49. Residues 169–175 (YLDAGSG), 200–201 (GG), and 222–223 (GN) each bind sn-glycerol 1-phosphate.

This sequence belongs to the GGGP/HepGP synthase family. Group II subfamily. As to quaternary structure, homohexamer. Mg(2+) serves as cofactor.

The catalysed reaction is sn-glycerol 1-phosphate + (2E,6E,10E)-geranylgeranyl diphosphate = sn-3-O-(geranylgeranyl)glycerol 1-phosphate + diphosphate. Its function is as follows. Prenyltransferase that catalyzes the transfer of the geranylgeranyl moiety of geranylgeranyl diphosphate (GGPP) to the C3 hydroxyl of sn-glycerol-1-phosphate (G1P). The protein is Geranylgeranylglyceryl phosphate synthase of Spirosoma linguale (strain ATCC 33905 / DSM 74 / LMG 10896 / Claus 1).